Consider the following 315-residue polypeptide: ATP synthase gamma chain (315 aa).

It belongs to the ATPase gamma chain family. In terms of assembly, F-type ATPases have 2 components, CF(1) - the catalytic core - and CF(0) - the membrane proton channel. CF(1) has five subunits: alpha(3), beta(3), gamma(1), delta(1), epsilon(1). CF(0) has three main subunits: a, b and c.

It localises to the cellular thylakoid membrane. Its function is as follows. Produces ATP from ADP in the presence of a proton gradient across the membrane. The gamma chain is believed to be important in regulating ATPase activity and the flow of protons through the CF(0) complex. In Cyanothece sp. (strain PCC 7425 / ATCC 29141), this protein is ATP synthase gamma chain.